A 118-amino-acid chain; its full sequence is Putative membrane protein insertion efficiency factor (118 aa).

The protein belongs to the UPF0161 family.

Its subcellular location is the cell inner membrane. Could be involved in insertion of integral membrane proteins into the membrane. The polypeptide is Putative membrane protein insertion efficiency factor (Helicobacter pylori (strain HPAG1)).